The chain runs to 215 residues: 3-isopropylmalate dehydratase small subunit (215 aa).

Belongs to the LeuD family. LeuD type 1 subfamily. In terms of assembly, heterodimer of LeuC and LeuD.

It carries out the reaction (2R,3S)-3-isopropylmalate = (2S)-2-isopropylmalate. It functions in the pathway amino-acid biosynthesis; L-leucine biosynthesis; L-leucine from 3-methyl-2-oxobutanoate: step 2/4. Functionally, catalyzes the isomerization between 2-isopropylmalate and 3-isopropylmalate, via the formation of 2-isopropylmaleate. This Xylella fastidiosa (strain 9a5c) protein is 3-isopropylmalate dehydratase small subunit.